The primary structure comprises 255 residues: Pyridoxine 5'-phosphate synthase (255 aa).

Asparagine 6 is a binding site for 3-amino-2-oxopropyl phosphate. 8-9 (DH) is a 1-deoxy-D-xylulose 5-phosphate binding site. Arginine 17 contacts 3-amino-2-oxopropyl phosphate. The Proton acceptor role is filled by histidine 41. 1-deoxy-D-xylulose 5-phosphate-binding residues include arginine 43 and histidine 48. Glutamate 68 (proton acceptor) is an active-site residue. Position 96 (threonine 96) interacts with 1-deoxy-D-xylulose 5-phosphate. Histidine 208 serves as the catalytic Proton donor. 3-amino-2-oxopropyl phosphate is bound by residues glycine 209 and 230–231 (GQ).

The protein belongs to the PNP synthase family. In terms of assembly, homooctamer; tetramer of dimers.

The protein localises to the cytoplasm. The enzyme catalyses 3-amino-2-oxopropyl phosphate + 1-deoxy-D-xylulose 5-phosphate = pyridoxine 5'-phosphate + phosphate + 2 H2O + H(+). The protein operates within cofactor biosynthesis; pyridoxine 5'-phosphate biosynthesis; pyridoxine 5'-phosphate from D-erythrose 4-phosphate: step 5/5. Its function is as follows. Catalyzes the complicated ring closure reaction between the two acyclic compounds 1-deoxy-D-xylulose-5-phosphate (DXP) and 3-amino-2-oxopropyl phosphate (1-amino-acetone-3-phosphate or AAP) to form pyridoxine 5'-phosphate (PNP) and inorganic phosphate. In Campylobacter lari (strain RM2100 / D67 / ATCC BAA-1060), this protein is Pyridoxine 5'-phosphate synthase.